We begin with the raw amino-acid sequence, 348 residues long: Carbamoyl phosphate synthase small chain (348 aa).

Residues 1–167 (MKRYLITSDG…VKNIRGKGER (167 aa)) form a CPSase region. Residues S45, G213, and G215 each contribute to the L-glutamine site. The 181-residue stretch at 168–348 (RILFIDLGSK…RRRTEDAAKG (181 aa)) folds into the Glutamine amidotransferase type-1 domain. The active-site Nucleophile is the C242. F243, Q246, N282, G284, and Y285 together coordinate L-glutamine. Active-site residues include H321 and E323.

The protein belongs to the CarA family. As to quaternary structure, composed of two chains; the small (or glutamine) chain promotes the hydrolysis of glutamine to ammonia, which is used by the large (or ammonia) chain to synthesize carbamoyl phosphate. Tetramer of heterodimers (alpha,beta)4.

The enzyme catalyses hydrogencarbonate + L-glutamine + 2 ATP + H2O = carbamoyl phosphate + L-glutamate + 2 ADP + phosphate + 2 H(+). It catalyses the reaction L-glutamine + H2O = L-glutamate + NH4(+). It functions in the pathway amino-acid biosynthesis; L-arginine biosynthesis; carbamoyl phosphate from bicarbonate: step 1/1. It participates in pyrimidine metabolism; UMP biosynthesis via de novo pathway; (S)-dihydroorotate from bicarbonate: step 1/3. Its function is as follows. Small subunit of the glutamine-dependent carbamoyl phosphate synthetase (CPSase). CPSase catalyzes the formation of carbamoyl phosphate from the ammonia moiety of glutamine, carbonate, and phosphate donated by ATP, constituting the first step of 2 biosynthetic pathways, one leading to arginine and/or urea and the other to pyrimidine nucleotides. The small subunit (glutamine amidotransferase) binds and cleaves glutamine to supply the large subunit with the substrate ammonia. The sequence is that of Carbamoyl phosphate synthase small chain from Thermoplasma acidophilum (strain ATCC 25905 / DSM 1728 / JCM 9062 / NBRC 15155 / AMRC-C165).